The chain runs to 729 residues: Capsid protein VP1 (729 aa).

Residues 1–10 (MAPPAKRAKR) are compositionally biased toward basic residues. Disordered stretches follow at residues 1–38 (MAPP…SDAA), 96–115 (LATD…KRTR), and 130–185 (KLTS…VGVS). The short motif at 4–13 (PAKRAKRGWV) is the Nuclear localization signal element. Residues 19 to 64 (YLGPGNSLDQGEPTNPSDAAAKEHDEAYDQYIKSGKNPYLYFSAAD) are phospholipase A2-like. Residues 25–35 (SLDQGEPTNPS) show a composition bias toward polar residues. A compositionally biased stretch (low complexity) spans 132 to 142 (TSSAAQQSSQT). The span at 143–152 (MSDGTSQPDS) shows a compositional bias: polar residues. Over residues 168 to 184 (GPGGSGGGGSGGGGVGV) the composition is skewed to gly residues. Position 325 (Asn325) interacts with Mg(2+).

The protein belongs to the parvoviridae capsid protein family.

It is found in the virion. It localises to the host nucleus. Capsid protein self-assembles to form an icosahedral capsid with a T=1 symmetry, about 22 nm in diameter, and consisting of 60 copies of two size variants of the capsid proteins, VP1 and VP2, which differ by the presence of an N-terminal extension in the minor protein VP1. The capsid encapsulates the genomic ssDNA. Capsid proteins are responsible for the attachment to host cell receptors. This attachment induces virion internalization predominantly through clathrin-dependent endocytosis. Binding to the host receptors also induces capsid rearrangements leading to surface exposure of VP1 N-terminus, specifically its phospholipase A2-like region and putative nuclear localization signal(s). VP1 N-terminus might serve as a lipolytic enzyme to breach the endosomal membrane during entry into host cell and might contribute to virus transport to the nucleus. In Mus musculus (Mouse), this protein is Capsid protein VP1.